We begin with the raw amino-acid sequence, 127 residues long: Ribonuclease P protein component (127 aa).

The protein belongs to the RnpA family. In terms of assembly, consists of a catalytic RNA component (M1 or rnpB) and a protein subunit.

It carries out the reaction Endonucleolytic cleavage of RNA, removing 5'-extranucleotides from tRNA precursor.. Functionally, RNaseP catalyzes the removal of the 5'-leader sequence from pre-tRNA to produce the mature 5'-terminus. It can also cleave other RNA substrates such as 4.5S RNA. The protein component plays an auxiliary but essential role in vivo by binding to the 5'-leader sequence and broadening the substrate specificity of the ribozyme. This is Ribonuclease P protein component from Corynebacterium urealyticum (strain ATCC 43042 / DSM 7109).